We begin with the raw amino-acid sequence, 99 residues long: uncharacterized protein (99 aa).

The N-terminal stretch at 1–17 (MMMNSFFPAMALMVLVG) is a signal peptide. C18 carries the N-palmitoyl cysteine lipid modification. A lipid anchor (S-diacylglycerol cysteine) is attached at C18.

It is found in the cell membrane. This is an uncharacterized protein from Escherichia coli O157:H7.